Reading from the N-terminus, the 362-residue chain is MRKQWLGICIAAGMLAACTSDDGQQQTVSVPQPAVCNGPIVEISGADPRFEPLNATANQDYQRDGKSYKIVQDPSRFSQAGLAAIYDAEPGSNLTASGEAFDPTQLTAAHPTLPIPSYARITNLANGRMIVVRINDRGPYGNDRVISLSRAAADRLNTSNNTKVRIDPIIVAQDGSLSGPGMACTTVAKQTYALPAPPDLSGGAGTSSVSGPQGDILPVSNSTLKSEDPTGAPVTSSGFLGAPTTLAPGVLEGSEPTPAPQPVVTAPSTTPATSPAMVTPQAVSQSASGNFMVQVGAVSDQARAQQYQQQLGQKFGVPGRVTQNGAVWRIQLGPFASKAEASTLQQRLQTEAQLQSFITTAQ.

Residues Met-1–Ala-17 form the signal peptide. Cys-18 is lipidated: N-palmitoyl cysteine. Cys-18 carries the S-diacylglycerol cysteine lipid modification. The disordered stretch occupies residues Pro-198–Ala-276. The span at Pro-262–Ala-276 shows a compositional bias: low complexity. The SPOR domain occupies Gln-285–Ala-361.

This sequence belongs to the RlpA family.

It localises to the cell membrane. Its function is as follows. Lytic transglycosylase with a strong preference for naked glycan strands that lack stem peptides. The sequence is that of Endolytic peptidoglycan transglycosylase RlpA from Escherichia coli (strain K12).